The primary structure comprises 317 residues: Beta-ketoacyl-[acyl-carrier-protein] synthase III (317 aa).

Active-site residues include C112 and H244. Residues 245 to 249 (QANIR) are ACP-binding. N274 is a catalytic residue.

It belongs to the thiolase-like superfamily. FabH family. As to quaternary structure, homodimer.

The protein resides in the cytoplasm. It carries out the reaction malonyl-[ACP] + acetyl-CoA + H(+) = 3-oxobutanoyl-[ACP] + CO2 + CoA. Its pathway is lipid metabolism; fatty acid biosynthesis. In terms of biological role, catalyzes the condensation reaction of fatty acid synthesis by the addition to an acyl acceptor of two carbons from malonyl-ACP. Catalyzes the first condensation reaction which initiates fatty acid synthesis and may therefore play a role in governing the total rate of fatty acid production. Possesses both acetoacetyl-ACP synthase and acetyl transacylase activities. Its substrate specificity determines the biosynthesis of branched-chain and/or straight-chain of fatty acids. The chain is Beta-ketoacyl-[acyl-carrier-protein] synthase III from Rickettsia massiliae (strain Mtu5).